The chain runs to 250 residues: Ferritin, chloroplastic (250 aa).

Residues 1-49 (MALAPSKVSTFSGFSPKPSVGGAQKNPTCSVSLSFLNEKLGSRNLRVCA) constitute a chloroplast transit peptide. Positions 50–82 (STVPLTGVIFEPFEEVKKSELAVPTAPQVSLAR) are extension peptide (EP). The Ferritin-like diiron domain maps to 83–236 (QNYADECESA…EYVAQLRRVG (154 aa)). 5 residues coordinate Fe cation: Glu100, Glu135, His138, Glu184, and Gln218.

This sequence belongs to the ferritin family. Oligomer of 24 subunits. There are two types of subunits: L (light) chain and H (heavy) chain. The major chain can be light or heavy, depending on the species and tissue type. The functional molecule forms a roughly spherical shell with a diameter of 12 nm and contains a central cavity into which the insoluble mineral iron core is deposited.

It localises to the plastid. The protein localises to the chloroplast. It carries out the reaction 4 Fe(2+) + O2 + 4 H(+) = 4 Fe(3+) + 2 H2O. Stores iron in a soluble, non-toxic, readily available form. Important for iron homeostasis. Has ferroxidase activity. Iron is taken up in the ferrous form and deposited as ferric hydroxides after oxidation. The chain is Ferritin, chloroplastic from Malus baccata var. xiaojinensis (Apple).